Here is a 273-residue protein sequence, read N- to C-terminus: Non-homologous end joining protein Ku (273 aa).

The 178-residue stretch at 13–190 (KLSLVTCPVA…FTGIEKKSDA (178 aa)) folds into the Ku domain. The interval 227 to 251 (KKKAKKPSKAKASKSTKGDDEEKSN) is disordered. Basic residues predominate over residues 228–240 (KKAKKPSKAKASK).

The protein belongs to the prokaryotic Ku family. In terms of assembly, homodimer. Interacts with LigD.

Its function is as follows. With LigD forms a non-homologous end joining (NHEJ) DNA repair enzyme, which repairs dsDNA breaks with reduced fidelity. Binds linear dsDNA with 5'- and 3'- overhangs but not closed circular dsDNA nor ssDNA. Recruits and stimulates the ligase activity of LigD. This is Non-homologous end joining protein Ku from Allorhizobium ampelinum (strain ATCC BAA-846 / DSM 112012 / S4) (Agrobacterium vitis (strain S4)).